Here is a 315-residue protein sequence, read N- to C-terminus: 4-carboxy-2-hydroxymuconate-6-semialdehyde dehydrogenase (315 aa).

This sequence belongs to the Gfo/Idh/MocA family. In terms of assembly, homodimer.

The catalysed reaction is 4-carboxy-2-hydroxymuconate semialdehyde hemiacetal + NADP(+) = 2-oxo-2H-pyran-4,6-dicarboxylate + NADPH + H(+). It participates in secondary metabolite metabolism; lignin degradation. Its activity is regulated as follows. Inhibited by p-chloromercuribenzoate (10 mM), HgCl2 (10 mM), or 5,5-dithiobis(2-nitrobenzoate) (100 mM). Functionally, involved in the degradation of protocatechuate (PCA) via the PCA 4,5-cleavage pathway. Catalyzes the oxidation of the hemiacetal form of 4-carboxy-2-hydroxymuconate-6-semialdehyde (CHMS) to produce 2-pyrone-4,6-dicarboxylate (PDC). LigC has 10-times-higher affinity to NADP than to NAD. In Sphingobium sp. (strain NBRC 103272 / SYK-6), this protein is 4-carboxy-2-hydroxymuconate-6-semialdehyde dehydrogenase (ligC).